The sequence spans 521 residues: Riboflavin transporter MCH5 (521 aa).

Disordered stretches follow at residues 1 to 33 (MSSD…SIHY) and 65 to 96 (NKGT…NEEI). At 1-103 (MSSDSLTPKD…EEIESFPEGG (103 aa)) the chain is on the cytoplasmic side. The chain crosses the membrane as a helical span at residues 104–124 (FKAWVVTFGCFLGLIACFGLL). An N-linked (GlcNAc...) asparagine glycan is attached at asparagine 125. Residues 125–143 (NSTGVIESHLQDNQLSSES) are Extracellular-facing. The chain crosses the membrane as a helical span at residues 144–164 (VSTIGWLFSLFLFVCSASCII). The Cytoplasmic portion of the chain corresponds to 165–172 (SGTYFDRN). The chain crosses the membrane as a helical span at residues 173–193 (GFRTIMIVGTVFHVAGLFATA). Asparagine 194 carries N-linked (GlcNAc...) asparagine glycosylation. Residues 194–200 (NSTKYWH) lie on the Extracellular side of the membrane. Residues 201–221 (FILSFAIVCGFGNGIVLSPLV) form a helical membrane-spanning segment. Over 222–233 (SVPAHYFFKRRG) the chain is Cytoplasmic. The chain crosses the membrane as a helical span at residues 234–254 (TALAMATIGGSVGGVVFPIML). At 255–269 (RSFFSMKSDTDPTYG) the chain is on the extracellular side. Residues 270 to 290 (FVWGIRTLGFLDLALLTLSII) form a helical membrane-spanning segment. The Cytoplasmic segment spans residues 291-325 (LVKERLPHVIENSKDGESRWRYILRVYILQCFDAK). The helical transmembrane segment at 326–346 (AFLDMKYLFCVLGTVFSELSI) threads the bilayer. At 347-367 (NSALTYYGSYATSHGISANDA) the chain is on the extracellular side. The chain crosses the membrane as a helical span at residues 368-388 (YTLIMIINVCGIPGRWVPGYL). At 389–396 (SDKFGRFN) the chain is on the cytoplasmic side. A helical transmembrane segment spans residues 397-417 (VAIATLLTLFIVMFVGWLPFG). Residues 418–422 (TNLTN) are Extracellular-facing. Asparagine 419 is a glycosylation site (N-linked (GlcNAc...) asparagine). Residues 423–443 (MYVISALYGFCSGSVFSLLPV) form a helical membrane-spanning segment. The Cytoplasmic segment spans residues 444-461 (CCGQISKTEEFGKRYSTM). Residues 462–482 (YFVVGFGTLVGIPITGAIISI) traverse the membrane as a helical segment. Residues 483–487 (KTTAD) are Extracellular-facing. The chain crosses the membrane as a helical span at residues 488–508 (YQHYIIFCGLATFVSAVCYII). The Cytoplasmic portion of the chain corresponds to 509–521 (SRAYCVGFKWVRF).

The protein belongs to the major facilitator superfamily. Monocarboxylate porter (TC 2.A.1.13) family.

It localises to the cell membrane. In terms of biological role, riboflavin transporter involved in riboflavin (vitamin B2) uptake. Does not act in the transport of monocarboxylic acids across the plasma membrane. The protein is Riboflavin transporter MCH5 (MCH5) of Saccharomyces cerevisiae (strain ATCC 204508 / S288c) (Baker's yeast).